We begin with the raw amino-acid sequence, 511 residues long: Maturase K (511 aa).

It belongs to the intron maturase 2 family. MatK subfamily.

It is found in the plastid. The protein resides in the chloroplast. In terms of biological role, usually encoded in the trnK tRNA gene intron. Probably assists in splicing its own and other chloroplast group II introns. The polypeptide is Maturase K (Primula veris (Cowslip)).